A 687-amino-acid chain; its full sequence is Putative mitochondrial carnitine O-acetyltransferase (687 aa).

The Proton acceptor role is filled by His346. 446-459 (GASHIKTVFKCSPD) provides a ligand contact to CoA. Positions 481 and 494 each coordinate (R)-carnitine. A Phosphoserine modification is found at Ser517.

This sequence belongs to the carnitine/choline acetyltransferase family.

Its subcellular location is the mitochondrion inner membrane. It carries out the reaction (R)-carnitine + acetyl-CoA = O-acetyl-(R)-carnitine + CoA. Its function is as follows. Involved in the transfer of acetyl-CoA into mitochondria. May also be involved in the metabolism of acetate and of ethanol. The chain is Putative mitochondrial carnitine O-acetyltransferase (YAT1) from Saccharomyces cerevisiae (strain ATCC 204508 / S288c) (Baker's yeast).